A 1705-amino-acid polypeptide reads, in one-letter code: Clathrin heavy chain 1 (1705 aa).

Ala-2 is modified (N-acetylalanine). Residues 2-492 (AAANAPIIMK…VDNDLALKIY (491 aa)) form a globular terminal domain region. WD40-like repeat stretches follow at residues 25–67 (FITF…RPIT), 68–113 (ADSA…MPEQ), 114–155 (VAFW…ANLA), 156–205 (NNQI…QALE), 206–270 (AHAA…PDFA), 271–314 (DDFP…ISPD), and 315–343 (PIFL…ATVN). Positions 462–478 (ENWLAEDKLECSEELGD) are binding site for the uncoating ATPase, involved in lattice disassembly. Residues 493 to 536 (IKARATPKVVAAFAERREFDKILIYSKQVGYTPDYMFLLQTILR) form a flexible linker region. A distal segment region spans residues 537-648 (TDPQGAVNFA…QSLKHYSELP (112 aa)). The segment at 537–1705 (TDPQGAVNFA…PYGMPPMGGY (1169 aa)) is heavy chain arm. CHCR repeat units follow at residues 551–697 (QMEG…QIIV), 700–842 (CKEY…PEDF), 847–986 (ILSV…QLID), 993–1138 (LPES…VSDA), 1142–1283 (FIRA…FRLA), 1288–1434 (LNII…DIIN), and 1437–1580 (LNVL…KECF). The proximal segment stretch occupies residues 653 to 1705 (VIVNTHAIEP…PYGMPPMGGY (1053 aa)). The segment at 1227–1536 (AAKIIYAFIS…YIYKKAGRWK (310 aa)) is involved in binding clathrin light chain. The tract at residues 1564 to 1705 (AEQLLVYFIE…PYGMPPMGGY (142 aa)) is trimerization.

Belongs to the clathrin heavy chain family. Clathrin triskelions, composed of 3 heavy chains and 3 light chains, are the basic subunits of the clathrin coat. Interacts with SCYL2B.

Its subcellular location is the cytoplasmic vesicle membrane. It localises to the membrane. The protein resides in the coated pit. Functionally, clathrin is the major protein of the polyhedral coat of coated pits and vesicles. Mediates endocytosis and is required for a correct polar distribution of PIN auxin transporters. The polypeptide is Clathrin heavy chain 1 (Arabidopsis thaliana (Mouse-ear cress)).